The primary structure comprises 47 residues: Short transmembrane mitochondrial protein 1 (47 aa).

A helical membrane pass occupies residues 7–23 (GFTLGNVVGMYLAQNYD).

Belongs to the STMP1 family. In terms of assembly, interacts with components of the ubiquinol-cytochrome c oxidoreductase (cytochrome b-c1 complex, complex III, CIII), such as UQCRC1/QCR1, UQCRC2/QCR2 and UQCR10/QCR9. Interacts with components of the cytochrome c oxidase (mitochondrial respiratory chain complex IV) complex, such as MT-CO2. In terms of tissue distribution, expressed in monocytes and dendritic cells.

It localises to the mitochondrion inner membrane. The protein localises to the mitochondrion outer membrane. Its subcellular location is the mitochondrion intermembrane space. Its function is as follows. Microprotein involved in mitochondrial respiratory chain complex III (ubiquinol-cytochrome c oxidoreductase) and complex IV (mitochondrial cytochrome c oxidase complex) assembly. Required for the formation of mitochondrial supercomplexes (SCs). Also required for the activation of the NLRP3 inflammasome. The polypeptide is Short transmembrane mitochondrial protein 1 (Homo sapiens (Human)).